Reading from the N-terminus, the 1118-residue chain is Carbamoyl phosphate synthase arginine-specific large chain (1118 aa).

The interval 23 to 420 (QLVEGVNSVL…AFQKALRQVD (398 aa)) is carboxyphosphate synthetic domain. The ATP site is built by Arg-150, Arg-190, Gly-196, Gly-197, Lys-227, Leu-229, Glu-234, Gly-260, Val-261, His-262, Gln-303, and Glu-317. Residues 154–346 (ASALKDINIP…LAYTAAKIGL (193 aa)) form the ATP-grasp 1 domain. Mg(2+)-binding residues include Gln-303, Glu-317, and Asn-319. Residues Gln-303, Glu-317, and Asn-319 each coordinate Mn(2+). Residues 421–573 (PSLLGFQGST…YTTYNATKND (153 aa)) form an oligomerization domain region. Residues 574–958 (VEFNENGMLV…SYWTAIQSTM (385 aa)) are carbamoyl phosphate synthetic domain. One can recognise an ATP-grasp 2 domain in the interval 698–890 (SSILDSIDVD…FIEIAVKAFL (193 aa)). ATP-binding residues include Arg-734, Lys-773, Ile-775, Glu-780, Gly-805, Val-806, His-807, Ser-808, Gln-848, and Glu-861. Gln-848, Glu-861, and Asn-863 together coordinate Mg(2+). Residues Gln-848, Glu-861, and Asn-863 each contribute to the Mn(2+) site. The allosteric domain stretch occupies residues 959–1102 (NFHVPLPPSG…KILESHDVIV (144 aa)). The MGS-like domain occupies 960-1118 (FHVPLPPSGI…WDEFIGFKAY (159 aa)).

This sequence belongs to the CarB family. In terms of assembly, heterodimer composed of 2 chains; the small (or glutamine) chain promotes the hydrolysis of glutamine to ammonia, which is used by the large (or ammonia) chain to synthesize carbamoyl phosphate. Mg(2+) is required as a cofactor. It depends on Mn(2+) as a cofactor.

Its subcellular location is the cytoplasm. The enzyme catalyses hydrogencarbonate + L-glutamine + 2 ATP + H2O = carbamoyl phosphate + L-glutamate + 2 ADP + phosphate + 2 H(+). It catalyses the reaction hydrogencarbonate + NH4(+) + 2 ATP = carbamoyl phosphate + 2 ADP + phosphate + 2 H(+). Its pathway is amino-acid biosynthesis; L-arginine biosynthesis; carbamoyl phosphate from bicarbonate: step 1/1. Its function is as follows. Large subunit of the arginine-specific carbamoyl phosphate synthase (CPSase). CPSase catalyzes the formation of carbamoyl phosphate from the ammonia moiety of glutamine, hydrogencarbonate, and phosphate donated by ATP, constituting the first step of 2 biosynthetic pathways, one leading to arginine and/or urea and the other to pyrimidine nucleotides. The large subunit (synthetase) binds the substrates ammonia (free or transferred from glutamine from the small subunit), hydrogencarbonate and ATP and carries out an ATP-coupled ligase reaction, activating hydrogencarbonate by forming carboxy phosphate which reacts with ammonia to form carbamoyl phosphate. The protein is Carbamoyl phosphate synthase arginine-specific large chain (CPA2) of Saccharomyces cerevisiae (strain ATCC 204508 / S288c) (Baker's yeast).